Consider the following 466-residue polypeptide: Ribulose bisphosphate carboxylase large chain (466 aa).

At lysine 5 the chain carries N6,N6,N6-trimethyllysine. The substrate site is built by asparagine 114 and threonine 164. Lysine 166 (proton acceptor) is an active-site residue. Lysine 168 is a binding site for substrate. Residues lysine 192, aspartate 194, and glutamate 195 each coordinate Mg(2+). Lysine 192 is subject to N6-carboxylysine. Histidine 285 functions as the Proton acceptor in the catalytic mechanism. Substrate is bound by residues arginine 286, histidine 318, and serine 370.

Belongs to the RuBisCO large chain family. Type I subfamily. Heterohexadecamer of 8 large chains and 8 small chains; disulfide-linked. The disulfide link is formed within the large subunit homodimers. The cofactor is Mg(2+). Post-translationally, the disulfide bond which can form in the large chain dimeric partners within the hexadecamer appears to be associated with oxidative stress and protein turnover.

Its subcellular location is the plastid. It is found in the chloroplast. The catalysed reaction is 2 (2R)-3-phosphoglycerate + 2 H(+) = D-ribulose 1,5-bisphosphate + CO2 + H2O. It catalyses the reaction D-ribulose 1,5-bisphosphate + O2 = 2-phosphoglycolate + (2R)-3-phosphoglycerate + 2 H(+). In terms of biological role, ruBisCO catalyzes two reactions: the carboxylation of D-ribulose 1,5-bisphosphate, the primary event in carbon dioxide fixation, as well as the oxidative fragmentation of the pentose substrate in the photorespiration process. Both reactions occur simultaneously and in competition at the same active site. The polypeptide is Ribulose bisphosphate carboxylase large chain (Oxalis dillenii (Gray-green wood sorrel)).